The primary structure comprises 536 residues: Phosphoenolpyruvate carboxykinase (ATP) (536 aa).

Substrate-binding residues include Arg61, Tyr195, and Lys201. ATP contacts are provided by residues Lys201, His220, and 236–244; that span reads GLSGTGKTT. Mn(2+)-binding residues include Lys201 and His220. Mn(2+) is bound at residue Asp257. 3 residues coordinate ATP: Glu285, Arg322, and Thr447. Arg322 contributes to the substrate binding site.

Belongs to the phosphoenolpyruvate carboxykinase (ATP) family. It depends on Mn(2+) as a cofactor.

It is found in the cytoplasm. The catalysed reaction is oxaloacetate + ATP = phosphoenolpyruvate + ADP + CO2. Its pathway is carbohydrate biosynthesis; gluconeogenesis. Involved in the gluconeogenesis. Catalyzes the conversion of oxaloacetate (OAA) to phosphoenolpyruvate (PEP) through direct phosphoryl transfer between the nucleoside triphosphate and OAA. The sequence is that of Phosphoenolpyruvate carboxykinase (ATP) from Brucella anthropi (strain ATCC 49188 / DSM 6882 / CCUG 24695 / JCM 21032 / LMG 3331 / NBRC 15819 / NCTC 12168 / Alc 37) (Ochrobactrum anthropi).